The sequence spans 484 residues: MTATTITPETKDEVVGVGRVVRVIGPVVDVEFPAGQLPEILNALHVDAEVMGETHAITLEVALHIGENVVRAISLKPTDGMRRGTEVRDTGAPISVPVGDVTKGHVWNVTGDVLNADPSTIEVTERWPIHRDPPAFDDLEPETEMLETGIKVLDLLTPYVKGGKIGLFGGAGVGKTVLIQEMIYRIAHNFGGTSVFAGVGERTREGNDLINEMDEAGVLKDTALVFGQMDEPPGTRLRIALTGLTMAEYFRDVQNQDVLLFIDNIFRFSQAGSEVSTLLGRMPSAVGYQPNLADEMGQLQERITSTRGHSITSMQAVYVPADDYTDPAPATTFAHLDATTELSREIASRGLYPAVDPLTSTSRILDPLYVGQEHYDTATQVKQILQRNKELQDIIAILGVDELSEEDKVTVARARRIQQFLSQNTYTAEKFTGVAGSTVPIADTVEGFQMICRGDVDHIPEQAFFNVGSMDMVMENWDKMKKEG.

Gly169–Thr176 serves as a coordination point for ATP.

Belongs to the ATPase alpha/beta chains family. F-type ATPases have 2 components, CF(1) - the catalytic core - and CF(0) - the membrane proton channel. CF(1) has five subunits: alpha(3), beta(3), gamma(1), delta(1), epsilon(1). CF(0) has three main subunits: a(1), b(2) and c(9-12). The alpha and beta chains form an alternating ring which encloses part of the gamma chain. CF(1) is attached to CF(0) by a central stalk formed by the gamma and epsilon chains, while a peripheral stalk is formed by the delta and b chains.

It is found in the cell membrane. It catalyses the reaction ATP + H2O + 4 H(+)(in) = ADP + phosphate + 5 H(+)(out). Its function is as follows. Produces ATP from ADP in the presence of a proton gradient across the membrane. The catalytic sites are hosted primarily by the beta subunits. The sequence is that of ATP synthase subunit beta from Cutibacterium acnes (strain DSM 16379 / KPA171202) (Propionibacterium acnes).